The sequence spans 82 residues: ATP synthase subunit c, chloroplastic (82 aa).

2 consecutive transmembrane segments (helical) span residues 7–27 (AASVVASGLSVGLAAIGPGIG) and 57–77 (LAFMESLTIYGLVVALALLFA).

It belongs to the ATPase C chain family. F-type ATPases have 2 components, F(1) - the catalytic core - and F(0) - the membrane proton channel. F(1) has five subunits: alpha(3), beta(3), gamma(1), delta(1), epsilon(1). F(0) has four main subunits: a(1), b(1), b'(1) and c(10-14). The alpha and beta chains form an alternating ring which encloses part of the gamma chain. F(1) is attached to F(0) by a central stalk formed by the gamma and epsilon chains, while a peripheral stalk is formed by the delta, b and b' chains.

The protein resides in the plastid. It localises to the chloroplast thylakoid membrane. Functionally, f(1)F(0) ATP synthase produces ATP from ADP in the presence of a proton or sodium gradient. F-type ATPases consist of two structural domains, F(1) containing the extramembraneous catalytic core and F(0) containing the membrane proton channel, linked together by a central stalk and a peripheral stalk. During catalysis, ATP synthesis in the catalytic domain of F(1) is coupled via a rotary mechanism of the central stalk subunits to proton translocation. In terms of biological role, key component of the F(0) channel; it plays a direct role in translocation across the membrane. A homomeric c-ring of between 10-14 subunits forms the central stalk rotor element with the F(1) delta and epsilon subunits. The polypeptide is ATP synthase subunit c, chloroplastic (Guillardia theta (Cryptophyte)).